Reading from the N-terminus, the 439-residue chain is CBL-interacting serine/threonine-protein kinase 20 (439 aa).

Residues 12-266 (YELGRLLGQG…IEKIMENSWF (255 aa)) enclose the Protein kinase domain. ATP-binding positions include 18–26 (LGQGTFAKV) and Lys-41. Catalysis depends on Asp-134, which acts as the Proton acceptor. Residues 152 to 181 (DFGLSALRESKQQDGLLHTTCGTPAYVAPE) form an activation loop region. Position 156 is a phosphoserine (Ser-156). Thr-170 is modified (phosphothreonine). Positions 297-322 (VKPMSYNAFDLISSLSQGFDLSGLFE) constitute an NAF domain. The PPI stretch occupies residues 326–356 (RSESKFTTKKDAKEIVSKFEEIATSSERFNL).

It belongs to the protein kinase superfamily. CAMK Ser/Thr protein kinase family. SNF1 subfamily. Mn(2+) serves as cofactor. In terms of processing, autophosphorylated. Confined to mature leaves.

It catalyses the reaction L-seryl-[protein] + ATP = O-phospho-L-seryl-[protein] + ADP + H(+). The enzyme catalyses L-threonyl-[protein] + ATP = O-phospho-L-threonyl-[protein] + ADP + H(+). Its function is as follows. CIPK serine-threonine protein kinases interact with CBL proteins. Binding of a CBL protein to the regulatory NAF domain of CIPK protein lead to the activation of the kinase in a calcium-dependent manner. Required for the abscisic acid-mediated (ABA) signaling pathway involved in seed germination and growth elongation inhibition. The polypeptide is CBL-interacting serine/threonine-protein kinase 20 (CIPK20) (Arabidopsis thaliana (Mouse-ear cress)).